Consider the following 101-residue polypeptide: Large ribosomal subunit protein uL23 (101 aa).

This sequence belongs to the universal ribosomal protein uL23 family. As to quaternary structure, part of the 50S ribosomal subunit. Contacts protein L29, and trigger factor when it is bound to the ribosome.

Its function is as follows. One of the early assembly proteins it binds 23S rRNA. One of the proteins that surrounds the polypeptide exit tunnel on the outside of the ribosome. Forms the main docking site for trigger factor binding to the ribosome. The protein is Large ribosomal subunit protein uL23 of Trichodesmium erythraeum (strain IMS101).